Reading from the N-terminus, the 461-residue chain is Cysteine--tRNA ligase (461 aa).

Residue Cys28 coordinates Zn(2+). The 'HIGH' region signature appears at 30 to 40 (ITVYDLCHIGH). Residues Cys209, His234, and Glu238 each contribute to the Zn(2+) site. The 'KMSKS' region signature appears at 266 to 270 (KMSKS). Position 269 (Lys269) interacts with ATP.

The protein belongs to the class-I aminoacyl-tRNA synthetase family. In terms of assembly, monomer. Requires Zn(2+) as cofactor.

It localises to the cytoplasm. The catalysed reaction is tRNA(Cys) + L-cysteine + ATP = L-cysteinyl-tRNA(Cys) + AMP + diphosphate. The protein is Cysteine--tRNA ligase of Escherichia coli (strain K12 / MC4100 / BW2952).